The sequence spans 354 residues: Lysine racemase (354 aa).

N6-(pyridoxal phosphate)lysine is present on Lys36.

Belongs to the alanine racemase family. Homodimer. The cofactor is pyridoxal 5'-phosphate.

It carries out the reaction L-lysine = D-lysine. The enzyme catalyses L-ornithine = D-ornithine. It participates in cell wall biogenesis; peptidoglycan biosynthesis. Functionally, catalyzes the interconversion of D-lysine and L-lysine. Has also high activity toward ornithine, and weaker activity toward alanine. Contributes to production of D-lysine and D-alanine for use as peptidoglycan components. The protein is Lysine racemase of Thermotoga maritima (strain ATCC 43589 / DSM 3109 / JCM 10099 / NBRC 100826 / MSB8).